The primary structure comprises 707 residues: Tryptophan synthase (707 aa).

The segment at 1–297 (MSEQLRQTFA…VKKEILDEFD (297 aa)) is tryptophan synthase alpha chain. Active-site proton acceptor residues include glutamate 50 and aspartate 61. The tryptophan synthase beta chain stretch occupies residues 298-707 (ENHKHPIRFG…DLRFEEDPSA (410 aa)). At lysine 384 the chain carries N6-(pyridoxal phosphate)lysine. Residues serine 540 and serine 683 each carry the phosphoserine modification.

In the N-terminal section; belongs to the TrpA family. This sequence in the C-terminal section; belongs to the TrpB family. It depends on pyridoxal 5'-phosphate as a cofactor.

The enzyme catalyses (1S,2R)-1-C-(indol-3-yl)glycerol 3-phosphate + L-serine = D-glyceraldehyde 3-phosphate + L-tryptophan + H2O. It functions in the pathway amino-acid biosynthesis; L-tryptophan biosynthesis; L-tryptophan from chorismate: step 5/5. This chain is Tryptophan synthase (TRP5), found in Saccharomyces cerevisiae (strain ATCC 204508 / S288c) (Baker's yeast).